The sequence spans 78 residues: Small ribosomal subunit protein bS18 (78 aa).

Belongs to the bacterial ribosomal protein bS18 family. As to quaternary structure, part of the 30S ribosomal subunit. Forms a tight heterodimer with protein bS6.

Binds as a heterodimer with protein bS6 to the central domain of the 16S rRNA, where it helps stabilize the platform of the 30S subunit. This is Small ribosomal subunit protein bS18 from Lactobacillus johnsonii (strain CNCM I-12250 / La1 / NCC 533).